A 69-amino-acid polypeptide reads, in one-letter code: DNA-directed RNA polymerase subunit omega (69 aa).

It belongs to the RNA polymerase subunit omega family. The RNAP catalytic core consists of 2 alpha, 1 beta, 1 beta' and 1 omega subunit. When a sigma factor is associated with the core the holoenzyme is formed, which can initiate transcription.

The catalysed reaction is RNA(n) + a ribonucleoside 5'-triphosphate = RNA(n+1) + diphosphate. Functionally, promotes RNA polymerase assembly. Latches the N- and C-terminal regions of the beta' subunit thereby facilitating its interaction with the beta and alpha subunits. The protein is DNA-directed RNA polymerase subunit omega of Geotalea uraniireducens (strain Rf4) (Geobacter uraniireducens).